Consider the following 469-residue polypeptide: 3-isopropylmalate dehydratase large subunit (469 aa).

[4Fe-4S] cluster-binding residues include C349, C410, and C413.

It belongs to the aconitase/IPM isomerase family. LeuC type 1 subfamily. As to quaternary structure, heterodimer of LeuC and LeuD. It depends on [4Fe-4S] cluster as a cofactor.

It carries out the reaction (2R,3S)-3-isopropylmalate = (2S)-2-isopropylmalate. The protein operates within amino-acid biosynthesis; L-leucine biosynthesis; L-leucine from 3-methyl-2-oxobutanoate: step 2/4. In terms of biological role, catalyzes the isomerization between 2-isopropylmalate and 3-isopropylmalate, via the formation of 2-isopropylmaleate. The polypeptide is 3-isopropylmalate dehydratase large subunit (Neisseria gonorrhoeae (strain NCCP11945)).